Here is a 367-residue protein sequence, read N- to C-terminus: Fructose-1,6-bisphosphatase class 1 3 (367 aa).

The protein belongs to the FBPase class 1 family. In terms of assembly, homotetramer.

It localises to the cytoplasm. It catalyses the reaction beta-D-fructose 1,6-bisphosphate + H2O = beta-D-fructose 6-phosphate + phosphate. It participates in carbohydrate biosynthesis; gluconeogenesis. This is Fructose-1,6-bisphosphatase class 1 3 from Paraburkholderia phymatum (strain DSM 17167 / CIP 108236 / LMG 21445 / STM815) (Burkholderia phymatum).